The chain runs to 273 residues: NH(3)-dependent NAD(+) synthetase (273 aa).

47–54 (GISGGQDS) contacts ATP. Residue aspartate 53 participates in Mg(2+) binding. Arginine 139 contacts deamido-NAD(+). Threonine 159 contacts ATP. Glutamate 164 is a Mg(2+) binding site. Deamido-NAD(+) is bound by residues lysine 172 and aspartate 179. Residues lysine 188 and threonine 210 each contribute to the ATP site. Position 259-260 (259-260 (HK)) interacts with deamido-NAD(+).

Belongs to the NAD synthetase family. Homodimer.

The enzyme catalyses deamido-NAD(+) + NH4(+) + ATP = AMP + diphosphate + NAD(+) + H(+). Its pathway is cofactor biosynthesis; NAD(+) biosynthesis; NAD(+) from deamido-NAD(+) (ammonia route): step 1/1. Its function is as follows. Catalyzes the ATP-dependent amidation of deamido-NAD to form NAD. Uses ammonia as a nitrogen source. The sequence is that of NH(3)-dependent NAD(+) synthetase from Staphylococcus haemolyticus (strain JCSC1435).